A 245-amino-acid chain; its full sequence is Carboxymethylenebutenolidase homolog (245 aa).

Residue A2 is modified to N-acetylalanine. K36 is subject to N6-acetyllysine. Catalysis depends on residues C132, D179, and H212. S223 bears the Phosphoserine mark.

Belongs to the dienelactone hydrolase family.

The protein localises to the cytoplasm. It localises to the cytosol. Functionally, cysteine hydrolase. The polypeptide is Carboxymethylenebutenolidase homolog (CMBL) (Pongo abelii (Sumatran orangutan)).